We begin with the raw amino-acid sequence, 251 residues long: Probable caffeoyl-CoA O-methyltransferase 3 (251 aa).

S-adenosyl-L-methionine is bound by residues Thr-61, Asp-83, Gly-85 to Val-86, Ser-91, Asp-109, and Ala-138. A divalent metal cation is bound at residue Asp-160. Asp-162 provides a ligand contact to S-adenosyl-L-methionine. A divalent metal cation-binding residues include Asp-186 and Asn-187.

It belongs to the class I-like SAM-binding methyltransferase superfamily. Cation-dependent O-methyltransferase family. CCoAMT subfamily.

The catalysed reaction is (E)-caffeoyl-CoA + S-adenosyl-L-methionine = (E)-feruloyl-CoA + S-adenosyl-L-homocysteine + H(+). In Dictyostelium discoideum (Social amoeba), this protein is Probable caffeoyl-CoA O-methyltransferase 3 (omt1).